A 203-amino-acid chain; its full sequence is Dephospho-CoA kinase (203 aa).

One can recognise a DPCK domain in the interval 4–201 (IIGLTGGIGS…RKYLMLARKH (198 aa)). 12–17 (GSGKTR) is a binding site for ATP.

This sequence belongs to the CoaE family.

Its subcellular location is the cytoplasm. The enzyme catalyses 3'-dephospho-CoA + ATP = ADP + CoA + H(+). It participates in cofactor biosynthesis; coenzyme A biosynthesis; CoA from (R)-pantothenate: step 5/5. Catalyzes the phosphorylation of the 3'-hydroxyl group of dephosphocoenzyme A to form coenzyme A. This is Dephospho-CoA kinase from Nitrosomonas europaea (strain ATCC 19718 / CIP 103999 / KCTC 2705 / NBRC 14298).